Reading from the N-terminus, the 124-residue chain is MSIDQKKLVDITNSIREMTITNVLDLISIMEKEFGVSAAAAVAVAAAPAEAVEEKTEFDVILKSFGENKVAVIKAVRGATGLGLKEAKELVEAAPKNVKEGINKEEAESLKKTLEEAGADVDIK.

This sequence belongs to the bacterial ribosomal protein bL12 family. In terms of assembly, homodimer. Part of the ribosomal stalk of the 50S ribosomal subunit. Forms a multimeric L10(L12)X complex, where L10 forms an elongated spine to which 2 to 4 L12 dimers bind in a sequential fashion. Binds GTP-bound translation factors.

Forms part of the ribosomal stalk which helps the ribosome interact with GTP-bound translation factors. Is thus essential for accurate translation. The chain is Large ribosomal subunit protein bL12 from Hamiltonella defensa subsp. Acyrthosiphon pisum (strain 5AT).